The sequence spans 287 residues: Small ribosomal subunit biogenesis GTPase RsgA (287 aa).

The CP-type G domain maps to Lys63–Leu223. GTP is bound by residues Ser113–Asp116 and Gly166–Thr174. The Zn(2+) site is built by Cys246, Cys251, His253, and Cys259.

This sequence belongs to the TRAFAC class YlqF/YawG GTPase family. RsgA subfamily. Monomer. Associates with 30S ribosomal subunit, binds 16S rRNA. Zn(2+) is required as a cofactor.

It is found in the cytoplasm. In terms of biological role, one of several proteins that assist in the late maturation steps of the functional core of the 30S ribosomal subunit. Helps release RbfA from mature subunits. May play a role in the assembly of ribosomal proteins into the subunit. Circularly permuted GTPase that catalyzes slow GTP hydrolysis, GTPase activity is stimulated by the 30S ribosomal subunit. The chain is Small ribosomal subunit biogenesis GTPase RsgA from Malacoplasma penetrans (strain HF-2) (Mycoplasma penetrans).